Reading from the N-terminus, the 234-residue chain is 7-carboxy-7-deazaguanine synthase (234 aa).

The tract at residues Met-1–Ala-28 is disordered. The span at Ile-13–Ser-23 shows a compositional bias: low complexity. Substrate contacts are provided by residues Leu-42–Gly-44 and Arg-57. The Radical SAM core domain maps to Thr-48 to Pro-234. Residues Cys-61, Cys-65, and Cys-68 each contribute to the [4Fe-4S] cluster site. Mg(2+) is bound at residue Thr-70. Residue Thr-100 participates in substrate binding. Gly-102 is a binding site for S-adenosyl-L-methionine. Pro-234 is a substrate binding site.

It belongs to the radical SAM superfamily. 7-carboxy-7-deazaguanine synthase family. Homodimer. It depends on [4Fe-4S] cluster as a cofactor. The cofactor is S-adenosyl-L-methionine. Mg(2+) is required as a cofactor.

The enzyme catalyses 6-carboxy-5,6,7,8-tetrahydropterin + H(+) = 7-carboxy-7-deazaguanine + NH4(+). The protein operates within purine metabolism; 7-cyano-7-deazaguanine biosynthesis. Functionally, catalyzes the complex heterocyclic radical-mediated conversion of 6-carboxy-5,6,7,8-tetrahydropterin (CPH4) to 7-carboxy-7-deazaguanine (CDG), a step common to the biosynthetic pathways of all 7-deazapurine-containing compounds. This is 7-carboxy-7-deazaguanine synthase from Methanospirillum hungatei JF-1 (strain ATCC 27890 / DSM 864 / NBRC 100397 / JF-1).